The chain runs to 365 residues: Probable secreted beta-glucosidase UTH1 (365 aa).

Residues 1–17 (MKLSALLALSASTAVLA) form the signal peptide.

Belongs to the SUN family.

The protein resides in the mitochondrion outer membrane. It is found in the secreted. The protein localises to the cell wall. Involved in aging, oxidative stress response, and in the regulation of mitochondrial biogenesis. Inactivation of UTH1 increases life span, leads to higher resistance to heat stress and against hydrogen peroxide, and increases sensitivity to the superoxide radical-generating drug paraquat and to copper. Also required for the selective autophagic degradation of mitochondria (mitophagy) in response to nitrogen starvation. Involved in the remodeling of the cell wall during the various phases of yeast culture development and under various environmental conditions and plays a role in septation. Involved in cell sensitivity to boric acid. The sequence is that of Probable secreted beta-glucosidase UTH1 (UTH1) from Saccharomyces cerevisiae (strain ATCC 204508 / S288c) (Baker's yeast).